The following is a 435-amino-acid chain: Apparent malate synthase (435 aa).

Mg(2+) contacts are provided by Glu-159 and Asn-180. Glu-159 provides a ligand contact to substrate.

It belongs to the HpcH/HpaI aldolase family. Mg(2+) is required as a cofactor. It depends on Mn(2+) as a cofactor. Co(2+) serves as cofactor. The cofactor is Ca(2+).

The catalysed reaction is (S)-malyl-CoA = glyoxylate + acetyl-CoA. It carries out the reaction (S)-malyl-CoA + H2O = (S)-malate + CoA + H(+). Functionally, involved in the methylaspartate cycle. Catalyzes the biosynthesis of malate in two steps. In the first reaction acetyl-CoA is condensed reversibly with glyoxylate to form (S)-malyl-CoA. In the second reaction (S)-malyl-CoA is hydrolyzed to malate and CoA. It can also catalyze the condensation of propionyl-CoA with glyoxylate and of acetyl-CoA with pyruvate, however the CoA-ester hydrolysis reaction is highly specific for (S)-malyl-CoA. The sequence is that of Apparent malate synthase (aceB) from Haloarcula marismortui (strain ATCC 43049 / DSM 3752 / JCM 8966 / VKM B-1809) (Halobacterium marismortui).